The primary structure comprises 509 residues: Pentatricopeptide repeat-containing protein At2g13420, mitochondrial (509 aa).

A mitochondrion-targeting transit peptide spans 1–19 (MLLLKQISPPFHLHQLRRR). 8 PPR repeats span residues 172–202 (RLVEFGFLLDTLCKYGYTKMAVGVFNERKEE), 206–240 (DEKVYTILIAGWCKLRRIDMAEKFLVEMIESGIEP), 241–285 (NVVT…GIEP), 286–320 (DVTSFSIVLHMYSRAHKAELTLDKMKLMKAKGISP), 321–355 (TIETYTSVVKCLCSCGRLEEAEELLETMVESGISP), 356–390 (SSATYNCFFKEYKGRKDANGAMNLYRKMKNGLCKP), 391–425 (STQTYNVLLGTFINLGKMETVKEIWDDLKASETGP), and 426–460 (DLDSYTSLVHGLCSKEKWKEACGYFVEMIERGFLP).

Belongs to the PPR family. P subfamily.

The protein resides in the mitochondrion. In Arabidopsis thaliana (Mouse-ear cress), this protein is Pentatricopeptide repeat-containing protein At2g13420, mitochondrial.